Here is a 425-residue protein sequence, read N- to C-terminus: Glutamyl-tRNA reductase (425 aa).

Residues 49–52, Ser107, 112–114, and Gln118 contribute to the substrate site; these read TCNR and EPQ. The active-site Nucleophile is the Cys50. Residue 187-192 coordinates NADP(+); sequence GAGETI.

The protein belongs to the glutamyl-tRNA reductase family. As to quaternary structure, homodimer.

The catalysed reaction is (S)-4-amino-5-oxopentanoate + tRNA(Glu) + NADP(+) = L-glutamyl-tRNA(Glu) + NADPH + H(+). It functions in the pathway porphyrin-containing compound metabolism; protoporphyrin-IX biosynthesis; 5-aminolevulinate from L-glutamyl-tRNA(Glu): step 1/2. In terms of biological role, catalyzes the NADPH-dependent reduction of glutamyl-tRNA(Glu) to glutamate 1-semialdehyde (GSA). This chain is Glutamyl-tRNA reductase, found in Pseudomonas syringae pv. syringae (strain B728a).